Consider the following 334-residue polypeptide: Phosphate acyltransferase (334 aa).

This sequence belongs to the PlsX family. In terms of assembly, homodimer. Probably interacts with PlsY.

It localises to the cytoplasm. The enzyme catalyses a fatty acyl-[ACP] + phosphate = an acyl phosphate + holo-[ACP]. Its pathway is lipid metabolism; phospholipid metabolism. Catalyzes the reversible formation of acyl-phosphate (acyl-PO(4)) from acyl-[acyl-carrier-protein] (acyl-ACP). This enzyme utilizes acyl-ACP as fatty acyl donor, but not acyl-CoA. The polypeptide is Phosphate acyltransferase (Streptococcus thermophilus (strain CNRZ 1066)).